A 320-amino-acid polypeptide reads, in one-letter code: Ubiquitin-like domain-containing CTD phosphatase 1 (320 aa).

One can recognise a Ubiquitin-like domain in the interval 6–77 (VVVIVKWSGK…LKPNFKLMMV (72 aa)). Residues 136-296 (PREGKKLLVL…LKLSDYLRKI (161 aa)) enclose the FCP1 homology domain. Residues aspartate 146, aspartate 148, and aspartate 255 each contribute to the Mg(2+) site.

It depends on Mg(2+) as a cofactor.

The protein localises to the nucleus. It catalyses the reaction O-phospho-L-seryl-[protein] + H2O = L-seryl-[protein] + phosphate. The enzyme catalyses O-phospho-L-threonyl-[protein] + H2O = L-threonyl-[protein] + phosphate. Its function is as follows. Dephosphorylates 26S nuclear proteasomes, thereby decreasing their proteolytic activity. Recruited to the 19S regulatory particle of the 26S proteasome where it dephosphorylates 19S component Rpt1 which impairs Rpt1 ATPase activity and disrupts 26S proteasome assembly. This chain is Ubiquitin-like domain-containing CTD phosphatase 1, found in Drosophila melanogaster (Fruit fly).